A 150-amino-acid chain; its full sequence is Arginine repressor (150 aa).

It belongs to the ArgR family.

The protein localises to the cytoplasm. Its pathway is amino-acid biosynthesis; L-arginine biosynthesis [regulation]. In terms of biological role, regulates arginine biosynthesis genes. This chain is Arginine repressor, found in Staphylococcus saprophyticus subsp. saprophyticus (strain ATCC 15305 / DSM 20229 / NCIMB 8711 / NCTC 7292 / S-41).